Reading from the N-terminus, the 372-residue chain is Glutamate 5-kinase (372 aa).

Lysine 14 is a binding site for ATP. Substrate contacts are provided by serine 54, aspartate 141, and asparagine 153. ATP is bound by residues 173–174 and 215–221; these read TD and SGGMLTK. Positions 280–358 constitute a PUA domain; that stretch reads AGKVVVDEGA…HEIEHILGYI (79 aa).

The protein belongs to the glutamate 5-kinase family.

It is found in the cytoplasm. It carries out the reaction L-glutamate + ATP = L-glutamyl 5-phosphate + ADP. The protein operates within amino-acid biosynthesis; L-proline biosynthesis; L-glutamate 5-semialdehyde from L-glutamate: step 1/2. Functionally, catalyzes the transfer of a phosphate group to glutamate to form L-glutamate 5-phosphate. The polypeptide is Glutamate 5-kinase (Methylobacillus flagellatus (strain ATCC 51484 / DSM 6875 / VKM B-1610 / KT)).